The chain runs to 46 residues: Apamin (46 aa).

Residues 1–27 form the signal peptide; sequence MISMLRCIYLFLSVILITSYFVTPVMP. Cystine bridges form between C28–C38 and C30–C42. The essential for toxin activity stretch occupies residues 40 to 41; sequence RR. H45 is subject to Histidine amide.

As to expression, expressed by the venom gland.

Its subcellular location is the secreted. Toxin with unique selectivity to KCa2 channels. Potently blocks human, rat and mouse KCa2.2/KCNN2/SK2 channels (IC(50)=27-140 pM), and moderately blocks human and rat KCa2.3/KCNN3/SK3 channels (IC(50)=0.6-4 nM), and human (IC(50)=0.7-12 nM) and mouse (IC(50)=28 nM) KCa2.1/KCNN1/SK1 channels. Does not show any antimicrobial activity. In vivo, intracerebroventricular injection into rats of a dose of 1 ng results in neurodegeneration specifically in the Purkinje cells of the cerebellum, and induces seizures characterized by hypersensitivity to noise, loss of postural control, paroxystic jerking, and alternating periods of great agitation with tonic-clonic convulsions and periods of total prostration. When administered at high doses, exerts anti-inflammatory, anti-oxidative, anti-fibrotic and anti-apoptotic properties in several models of inflammatory disease, including gouty arthritis, atherosclerosis, atopic dermatitis and acute kidney injury. Down-regulates pro-inflammatory signaling pathways, such as the NF-kappaB and STAT3 pathways, probably by blocking SK channels such as KCa2.2/KCNN2/SK2 and/or KCa2.3/KCNN3/SK3 which are thought to be involved in promoting some inflammatory responses. For example in mouse and rat microglia cells, inhibits LPS-activated KCa2.2/KCNN2/SK2 channels and TLR4 expression leading to the down-regulation of the NF-kappaB, STAT, and MAPK/ERK signaling pathways and, as a consequence, decreases secretion of pro-inflammatory cytokines. This is Apamin from Apis mellifera (Honeybee).